The sequence spans 302 residues: Sulfate adenylyltransferase subunit 2 (302 aa).

Belongs to the PAPS reductase family. CysD subfamily. In terms of assembly, heterodimer composed of CysD, the smaller subunit, and CysN.

It catalyses the reaction sulfate + ATP + H(+) = adenosine 5'-phosphosulfate + diphosphate. It participates in sulfur metabolism; hydrogen sulfide biosynthesis; sulfite from sulfate: step 1/3. Its function is as follows. With CysN forms the ATP sulfurylase (ATPS) that catalyzes the adenylation of sulfate producing adenosine 5'-phosphosulfate (APS) and diphosphate, the first enzymatic step in sulfur assimilation pathway. APS synthesis involves the formation of a high-energy phosphoric-sulfuric acid anhydride bond driven by GTP hydrolysis by CysN coupled to ATP hydrolysis by CysD. The protein is Sulfate adenylyltransferase subunit 2 of Xanthomonas axonopodis pv. citri (strain 306).